The chain runs to 111 residues: uncharacterized protein (111 aa).

The tract at residues 1–85 (MTGLMKAFQK…TSSREDEQKL (85 aa)) is disordered. A compositionally biased stretch (polar residues) spans 11–23 (LSPTKRQYAEITQ). A compositionally biased stretch (low complexity) spans 24-42 (SNSSISSSSSGSKYNDSSS). The span at 56–77 (ARASTSTQAQKPASSQQKGGTS) shows a compositional bias: polar residues.

This is an uncharacterized protein from Microplitis demolitor (Parasitoid wasp).